A 222-amino-acid chain; its full sequence is Peptide methionine sulfoxide reductase MsrA (222 aa).

The active site involves Cys-60.

It belongs to the MsrA Met sulfoxide reductase family.

It catalyses the reaction L-methionyl-[protein] + [thioredoxin]-disulfide + H2O = L-methionyl-(S)-S-oxide-[protein] + [thioredoxin]-dithiol. The enzyme catalyses [thioredoxin]-disulfide + L-methionine + H2O = L-methionine (S)-S-oxide + [thioredoxin]-dithiol. Its function is as follows. Has an important function as a repair enzyme for proteins that have been inactivated by oxidation. Catalyzes the reversible oxidation-reduction of methionine sulfoxide in proteins to methionine. This chain is Peptide methionine sulfoxide reductase MsrA, found in Pseudomonas putida (strain W619).